A 268-amino-acid chain; its full sequence is NAC domain-containing protein 41 (268 aa).

The NAC domain maps to 15-160 (LPPGFRFHPT…NWVLCRVFLK (146 aa)). The DNA-binding element occupies 109–166 (VGMKKTLVFYKGKPPNGTRTNWVLHEYRLVDSQQDSLYGQNMNWVLCRVFLKKRSNSN). The disordered stretch occupies residues 166–190 (NSKRKEDEKEEVENEKETETERERE). The span at 180 to 190 (EKETETERERE) shows a compositional bias: basic and acidic residues.

It is found in the nucleus. In terms of biological role, transcription activator of the mannan synthase CSLA9. Recognizes and binds to DNA-specific sequence of CSLA9 promoter. In Arabidopsis thaliana (Mouse-ear cress), this protein is NAC domain-containing protein 41.